Consider the following 406-residue polypeptide: Peptidyl-alpha-hydroxyglycine alpha-amidating lyase 2 (406 aa).

The signal sequence occupies residues 1–19 (MSRLLFVALLAISLGYVAS). 4 NHL repeats span residues 168 to 209 (GAIK…FKPF), 218 to 261 (GKRF…FNAA), 264 to 308 (LLRT…PKAG), and 358 to 402 (DPRS…RVWK). 2 disulfide bridges follow: Cys231/Cys251 and Cys293/Cys304.

It belongs to the peptidyl-alpha-hydroxyglycine alpha-amidating lyase family. The cofactor is Zn(2+). Post-translationally, N-glycosylated. As to expression, only found in a subset of neurons distributed throughout all levels of the central nervous system (CNS). Present in at least some neuroendocrine cells. In adult brains, it is only present in a small handful of cells, the majority of which being distributed in distal parts of the medulla, with a higher expression in the posterior surface of the brain (at protein level).

The protein resides in the secreted. It catalyses the reaction a [peptide]-C-terminal (2S)-2-hydroxyglycine = a [peptide]-C-terminal amide + glyoxylate. Its function is as follows. Peptidyl-alpha-hydroxylglycine alpha-amidating lyase that catalyzes an essential reaction in C-terminal alpha-amidation of peptides. Mediates the dismutation of the unstable peptidyl(2-hydroxyglycine) intermediate to glyoxylate and the corresponding desglycine peptide amide. C-terminal amidation of peptides such as neuropeptides is essential for full biological activity. This Drosophila melanogaster (Fruit fly) protein is Peptidyl-alpha-hydroxyglycine alpha-amidating lyase 2 (Pal2).